The chain runs to 155 residues: 6,7-dimethyl-8-ribityllumazine synthase (155 aa).

5-amino-6-(D-ribitylamino)uracil contacts are provided by residues Phe-23, 57 to 59, and 81 to 83; these read AFE and AVI. Residue 86 to 87 coordinates (2S)-2-hydroxy-3-oxobutyl phosphate; it reads AT. The active-site Proton donor is the His-89. 5-amino-6-(D-ribitylamino)uracil is bound at residue Phe-114. Arg-128 lines the (2S)-2-hydroxy-3-oxobutyl phosphate pocket.

This sequence belongs to the DMRL synthase family.

It catalyses the reaction (2S)-2-hydroxy-3-oxobutyl phosphate + 5-amino-6-(D-ribitylamino)uracil = 6,7-dimethyl-8-(1-D-ribityl)lumazine + phosphate + 2 H2O + H(+). The protein operates within cofactor biosynthesis; riboflavin biosynthesis; riboflavin from 2-hydroxy-3-oxobutyl phosphate and 5-amino-6-(D-ribitylamino)uracil: step 1/2. Functionally, catalyzes the formation of 6,7-dimethyl-8-ribityllumazine by condensation of 5-amino-6-(D-ribitylamino)uracil with 3,4-dihydroxy-2-butanone 4-phosphate. This is the penultimate step in the biosynthesis of riboflavin. The chain is 6,7-dimethyl-8-ribityllumazine synthase from Geotalea daltonii (strain DSM 22248 / JCM 15807 / FRC-32) (Geobacter daltonii).